Here is a 342-residue protein sequence, read N- to C-terminus: Phenylalanine--tRNA ligase alpha subunit (342 aa).

Residue E257 coordinates Mg(2+).

This sequence belongs to the class-II aminoacyl-tRNA synthetase family. Phe-tRNA synthetase alpha subunit type 1 subfamily. Tetramer of two alpha and two beta subunits. The cofactor is Mg(2+).

The protein localises to the cytoplasm. It catalyses the reaction tRNA(Phe) + L-phenylalanine + ATP = L-phenylalanyl-tRNA(Phe) + AMP + diphosphate + H(+). This is Phenylalanine--tRNA ligase alpha subunit from Legionella pneumophila subsp. pneumophila (strain Philadelphia 1 / ATCC 33152 / DSM 7513).